A 266-amino-acid chain; its full sequence is Imidazole glycerol phosphate synthase subunit HisF (266 aa).

Residues Asp-11 and Asp-130 contribute to the active site.

This sequence belongs to the HisA/HisF family. In terms of assembly, heterodimer of HisH and HisF.

It is found in the cytoplasm. It catalyses the reaction 5-[(5-phospho-1-deoxy-D-ribulos-1-ylimino)methylamino]-1-(5-phospho-beta-D-ribosyl)imidazole-4-carboxamide + L-glutamine = D-erythro-1-(imidazol-4-yl)glycerol 3-phosphate + 5-amino-1-(5-phospho-beta-D-ribosyl)imidazole-4-carboxamide + L-glutamate + H(+). It functions in the pathway amino-acid biosynthesis; L-histidine biosynthesis; L-histidine from 5-phospho-alpha-D-ribose 1-diphosphate: step 5/9. In terms of biological role, IGPS catalyzes the conversion of PRFAR and glutamine to IGP, AICAR and glutamate. The HisF subunit catalyzes the cyclization activity that produces IGP and AICAR from PRFAR using the ammonia provided by the HisH subunit. The polypeptide is Imidazole glycerol phosphate synthase subunit HisF (Albidiferax ferrireducens (strain ATCC BAA-621 / DSM 15236 / T118) (Rhodoferax ferrireducens)).